The primary structure comprises 75 residues: UPF0346 protein LSL_0716 (75 aa).

The protein belongs to the UPF0346 family.

The chain is UPF0346 protein LSL_0716 from Ligilactobacillus salivarius (strain UCC118) (Lactobacillus salivarius).